Here is a 282-residue protein sequence, read N- to C-terminus: MRVALGVAYNGQRYSGWQSQLSGNTIQDHLEAALGRFAAQEVHTLCAGRTDAGVHGLMQVVHFDTPLDRAPFSWVRGTNTFLPPDIAVQWAQPVPDAFHSRACATARRYAYVLLQSPVRPSVEAGRVGWVFHALDGDAMQAAARHLLGEHDFSSFRASGCQAKSPVKTLHRLSITRRMAGDGAQMAAASSMRPGDAAMECCYWRFEFEGSAFLHHMVRNIMGCLIAIGQGTYAPQWMQQVLDARSRDAAAPTFSPDGLYFLGPVYDPSWGLPSRSPAYDWLP.

The active-site Nucleophile is D51. Y109 contributes to the substrate binding site.

The protein belongs to the tRNA pseudouridine synthase TruA family. In terms of assembly, homodimer.

The catalysed reaction is uridine(38/39/40) in tRNA = pseudouridine(38/39/40) in tRNA. Its function is as follows. Formation of pseudouridine at positions 38, 39 and 40 in the anticodon stem and loop of transfer RNAs. The protein is tRNA pseudouridine synthase A of Delftia acidovorans (strain DSM 14801 / SPH-1).